The following is a 254-amino-acid chain: rRNA N-glycosylase sapovaccarin-S2 (254 aa).

The protein belongs to the ribosome-inactivating protein family. Type 1 RIP subfamily. As to expression, expressed in seeds; most abundant in the perisperm.

The enzyme catalyses Endohydrolysis of the N-glycosidic bond at one specific adenosine on the 28S rRNA.. Exhibits N-glycosylase activity. Catalyzes the release of one adenine from a ribosome. Acts as a ribosome-inactivating protein and inhibits protein synthesis. Induces cell death in Huh-7 liver cells. May contribute to the protection against plant pests and predators or play a role in regulating the death of plant cells. The chain is rRNA N-glycosylase sapovaccarin-S2 from Gypsophila vaccaria (Cow soapwort).